The primary structure comprises 412 residues: MSTMGSWVYITVELAIAVLAILGNVLVCWAVWLNSNLQNVTNYFVVSLAAADIAVGVLAIPFAITISTGFCAACHNCLFFACFVLVLTQSSIFSLLAIAIDRYIAIRIPLRYNGLVTGTRAKGIIAVCWVLSFAIGLTPMLGWNNCSQPKEGRNYSQGCGEGQVACLFEDVVPMNYMVYYNFFAFVLVPLLLMLGVYLRIFLAARRQLKQMESQPLPGERARSTLQKEVHAAKSLAIIVGLFALCWLPLHIINCFTFFCPECSHAPLWLMYLTIVLSHTNSVVNPFIYAYRIREFRQTFRKIIRSHVLRRREPFKAGGTSARALAAHGSDGEQISLRLNGHPPGVWANGSAPHPERRPNGYTLGLVSGGIAPESHGDMGLPDVELLSHELKGACPESPGLEGPLAQDGAGVS.

Over 1 to 7 (MSTMGSW) the chain is Extracellular. Residues 8 to 32 (VYITVELAIAVLAILGNVLVCWAVW) traverse the membrane as a helical segment. Residues 33–42 (LNSNLQNVTN) lie on the Cytoplasmic side of the membrane. Residues 43–66 (YFVVSLAAADIAVGVLAIPFAITI) form a helical membrane-spanning segment. The Extracellular portion of the chain corresponds to 67–77 (STGFCAACHNC). 3 disulfides stabilise this stretch: Cys71-Cys159, Cys74-Cys146, and Cys77-Cys166. The helical transmembrane segment at 78-100 (LFFACFVLVLTQSSIFSLLAIAI) threads the bilayer. Over 101–120 (DRYIAIRIPLRYNGLVTGTR) the chain is Cytoplasmic. The helical transmembrane segment at 121–143 (AKGIIAVCWVLSFAIGLTPMLGW) threads the bilayer. Over 144 to 173 (NNCSQPKEGRNYSQGCGEGQVACLFEDVVP) the chain is Extracellular. 2 N-linked (GlcNAc...) asparagine glycosylation sites follow: Asn145 and Asn154. Glu169 is a binding site for adenosine. Residues 174-198 (MNYMVYYNFFAFVLVPLLLMLGVYL) form a helical membrane-spanning segment. Over 199–234 (RIFLAARRQLKQMESQPLPGERARSTLQKEVHAAKS) the chain is Cytoplasmic. Residues 235–258 (LAIIVGLFALCWLPLHIINCFTFF) traverse the membrane as a helical segment. Residue Asn253 coordinates adenosine. A disulfide bridge links Cys259 with Cys262. Over 259–266 (CPECSHAP) the chain is Extracellular. The chain crosses the membrane as a helical span at residues 267 to 290 (LWLMYLTIVLSHTNSVVNPFIYAY). Residues Ser277 and His278 each contribute to the adenosine site. The Cytoplasmic segment spans residues 291 to 412 (RIREFRQTFR…PLAQDGAGVS (122 aa)). The interval 392-412 (GACPESPGLEGPLAQDGAGVS) is disordered.

This sequence belongs to the G-protein coupled receptor 1 family. In terms of assembly, interacts (via cytoplasmic C-terminal domain) with USP4; the interaction is direct. May interact with DRD4. Interacts with NECAB2. Interacts (via cytoplasmic C-terminal domain) with GAS2L2; interaction enhances receptor-mediated adenylyl cyclase activity. Post-translationally, ubiquitinated. Deubiquitinated by USP4; leading to stabilization and expression at the cell surface.

The protein localises to the cell membrane. Functionally, receptor for adenosine. The activity of this receptor is mediated by G proteins which activate adenylyl cyclase. The chain is Adenosine receptor A2a (ADORA2A) from Canis lupus familiaris (Dog).